We begin with the raw amino-acid sequence, 544 residues long: Chaperonin GroEL (544 aa).

Residues 30 to 33 (TLGP), Lys51, 87 to 91 (DGTTT), Gly415, 481 to 483 (DAL), and Asp497 each bind ATP.

This sequence belongs to the chaperonin (HSP60) family. In terms of assembly, forms a cylinder of 14 subunits composed of two heptameric rings stacked back-to-back. Interacts with the co-chaperonin GroES.

The protein resides in the cytoplasm. The enzyme catalyses ATP + H2O + a folded polypeptide = ADP + phosphate + an unfolded polypeptide.. Its function is as follows. Together with its co-chaperonin GroES, plays an essential role in assisting protein folding. The GroEL-GroES system forms a nano-cage that allows encapsulation of the non-native substrate proteins and provides a physical environment optimized to promote and accelerate protein folding. This is Chaperonin GroEL from Chlamydia felis (strain Fe/C-56) (Chlamydophila felis).